The chain runs to 482 residues: Aspartyl/glutamyl-tRNA(Asn/Gln) amidotransferase subunit B (482 aa).

Belongs to the GatB/GatE family. GatB subfamily. In terms of assembly, heterotrimer of A, B and C subunits.

The enzyme catalyses L-glutamyl-tRNA(Gln) + L-glutamine + ATP + H2O = L-glutaminyl-tRNA(Gln) + L-glutamate + ADP + phosphate + H(+). It catalyses the reaction L-aspartyl-tRNA(Asn) + L-glutamine + ATP + H2O = L-asparaginyl-tRNA(Asn) + L-glutamate + ADP + phosphate + 2 H(+). Allows the formation of correctly charged Asn-tRNA(Asn) or Gln-tRNA(Gln) through the transamidation of misacylated Asp-tRNA(Asn) or Glu-tRNA(Gln) in organisms which lack either or both of asparaginyl-tRNA or glutaminyl-tRNA synthetases. The reaction takes place in the presence of glutamine and ATP through an activated phospho-Asp-tRNA(Asn) or phospho-Glu-tRNA(Gln). In Thermotoga neapolitana (strain ATCC 49049 / DSM 4359 / NBRC 107923 / NS-E), this protein is Aspartyl/glutamyl-tRNA(Asn/Gln) amidotransferase subunit B.